The sequence spans 255 residues: Small ribosomal subunit protein eS1B (255 aa).

Alanine 2 carries the N-acetylalanine; partial modification. Serine 245 is modified (phosphoserine). Lysine 248 participates in a covalent cross-link: Glycyl lysine isopeptide (Lys-Gly) (interchain with G-Cter in ubiquitin). Threonine 254 bears the Phosphothreonine mark.

It belongs to the eukaryotic ribosomal protein eS1 family. In terms of assembly, component of the small ribosomal subunit. Mature ribosomes consist of a small (40S) and a large (60S) subunit. The 40S subunit contains about 33 different proteins and 1 molecule of RNA (18S). The 60S subunit contains about 49 different proteins and 3 molecules of RNA (25S, 5.8S and 5S).

The protein localises to the cytoplasm. The sequence is that of Small ribosomal subunit protein eS1B from Saccharomyces cerevisiae (strain RM11-1a) (Baker's yeast).